Reading from the N-terminus, the 378-residue chain is Erythronate-4-phosphate dehydrogenase (378 aa).

The substrate site is built by S45 and T66. Residues D142 and T169 each coordinate NAD(+). Residue R202 is part of the active site. Residue D226 coordinates NAD(+). E231 is a catalytic residue. The active-site Proton donor is the H248. NAD(+) is bound at residue G251. A substrate-binding site is contributed by Y252.

Belongs to the D-isomer specific 2-hydroxyacid dehydrogenase family. PdxB subfamily. In terms of assembly, homodimer.

It is found in the cytoplasm. The enzyme catalyses 4-phospho-D-erythronate + NAD(+) = (R)-3-hydroxy-2-oxo-4-phosphooxybutanoate + NADH + H(+). The protein operates within cofactor biosynthesis; pyridoxine 5'-phosphate biosynthesis; pyridoxine 5'-phosphate from D-erythrose 4-phosphate: step 2/5. Functionally, catalyzes the oxidation of erythronate-4-phosphate to 3-hydroxy-2-oxo-4-phosphonooxybutanoate. This is Erythronate-4-phosphate dehydrogenase from Cellvibrio japonicus (strain Ueda107) (Pseudomonas fluorescens subsp. cellulosa).